The sequence spans 4490 residues: Dynein axonemal heavy chain 8 (4490 aa).

Phosphoserine is present on S674. AAA stretches follow at residues 1808–2030 (YQNE…VLRT), 2090–2309 (NAVA…KLNL), 2416–2669 (YYPT…IWQG), and 2780–3034 (QFNE…YRRR). ATP-binding positions include 1846-1853 (GPAGTGKT) and 2128-2135 (GPSGSGKT). The interval 3049–3346 (YKNIYAEKVK…MDLLNDADTC (298 aa)) is stalk. Coiled-coil stretches lie at residues 3072 to 3164 (DKLM…ALNT), 3290 to 3354 (LKAN…QAAS), and 3594 to 3630 (RRVI…DNLL). 2 AAA regions span residues 3432 to 3662 (LVDP…EVSE) and 3877 to 4091 (ARKY…FIQN).

The protein belongs to the dynein heavy chain family. In terms of assembly, consists of at least two heavy chains and a number of intermediate and light chains. Expressed in spermatozoa (at protein level). Not detected in airway epithelial cells (at protein level).

Its subcellular location is the cytoplasm. It is found in the cytoskeleton. The protein resides in the flagellum axoneme. Its function is as follows. Force generating protein component of the outer dynein arms (ODAs) in the sperm flagellum. Produces force towards the minus ends of microtubules. Dynein has ATPase activity; the force-producing power stroke is thought to occur on release of ADP. Involved in sperm motility; implicated in sperm flagellar assembly. The sequence is that of Dynein axonemal heavy chain 8 from Homo sapiens (Human).